The chain runs to 338 residues: Methionine import ATP-binding protein MetN 2 (338 aa).

Residues 2 to 242 (IEIEKVCVDF…PQHAFTQQLV (241 aa)) form the ABC transporter domain. Position 39–46 (39–46 (GTSGAGKS)) interacts with ATP.

This sequence belongs to the ABC transporter superfamily. Methionine importer (TC 3.A.1.24) family. In terms of assembly, the complex is composed of two ATP-binding proteins (MetN), two transmembrane proteins (MetI) and a solute-binding protein (MetQ).

Its subcellular location is the cell inner membrane. The catalysed reaction is L-methionine(out) + ATP + H2O = L-methionine(in) + ADP + phosphate + H(+). It catalyses the reaction D-methionine(out) + ATP + H2O = D-methionine(in) + ADP + phosphate + H(+). Functionally, part of the ABC transporter complex MetNIQ involved in methionine import. Responsible for energy coupling to the transport system. The chain is Methionine import ATP-binding protein MetN 2 from Salmonella choleraesuis (strain SC-B67).